Reading from the N-terminus, the 107-residue chain is Replication protein A 14 kDa subunit A (107 aa).

An N-acetylmethionine modification is found at methionine 1.

Belongs to the replication factor A protein 3 family. In terms of assembly, component of the heterotrimeric canonical replication protein A complex (RPA).

The protein resides in the nucleus. In terms of biological role, as part of the replication protein A (RPA/RP-A), a single-stranded DNA-binding heterotrimeric complex, may play an essential role in DNA replication, recombination and repair. Binds and stabilizes single-stranded DNA intermediates, preventing complementary DNA reannealing and recruiting different proteins involved in DNA metabolism. In Arabidopsis thaliana (Mouse-ear cress), this protein is Replication protein A 14 kDa subunit A (RPA3A).